We begin with the raw amino-acid sequence, 77 residues long: Apelin (77 aa).

Positions 1 to 22 (MNLRLCVQALLLLWLSLTAVCG) are cleaved as a signal peptide. Positions 23-41 (GSLMPLPDGNGLEDGNVRH) are excised as a propeptide. The disordered stretch occupies residues 43-77 (VQPRGSRNGPGPWQGGRRKFRRQRPRLSHKGPMPF). Positions 58–71 (GRRKFRRQRPRLSH) are enriched in basic residues.

It belongs to the apelin family. Post-translationally, several active peptides may be produced by proteolytic processing of the peptide precursor. Expressed in the brain with highest levels in the frontal cortex, thalamus, hypothalamus and midbrain. Secreted by the mammary gland into the colostrum and the milk.

It localises to the secreted. Its subcellular location is the extracellular space. Peptide hormone that functions as endogenous ligand for the G-protein-coupled apelin receptor (APLNR/APJ), that plays a role in cadiovascular homeostasis. Functions as a balanced agonist activating both G(i) protein pathway and beta-arrestin pathway of APLNR. Downstream G proteins activation, apelin can inhibit cAMP production and activate key intracellular effectors such as ERKs. On the other hand, APLNR activation induces beta-arrestin recruitment to the membrane leading to desensitization and internalization of the receptor. Apelin blunts cardiac hypertrophic induction from APLNR on response to pathological stimuli, but also induces myocardial hypertrophy under normal conditions. Apelin-36 dissociates more hardly than (pyroglu)apelin-13 from APLNR. Involved in the regulation of cardiac precursor cell movements during gastrulation and heart morphogenesis. Has an inhibitory effect on cytokine production in response to T-cell receptor/CD3 cross-linking; the oral intake of apelin in the colostrum and the milk might therefore modulate immune responses in neonates. Plays a role in early coronary blood vessels formation. Mediates myocardial contractility in an ERK1/2-dependent manner. May also have a role in the central control of body fluid homeostasis by influencing vasopressin release and drinking behavior. Its function is as follows. (Microbial infection) Endogenous ligand for the apelin receptor (APLNR), an alternative coreceptor with CD4 for HIV-1 infection. Inhibits HIV-1 entry in cells coexpressing CD4 and APLNR. Apelin-36 has a greater inhibitory activity on HIV infection than other synthetic apelin derivatives. This chain is Apelin, found in Homo sapiens (Human).